Here is a 219-residue protein sequence, read N- to C-terminus: Dehydration-responsive element-binding protein 1F (219 aa).

The disordered stretch occupies residues 1–45; sequence MDTEDTSSASSSSVSPPSSPGGGHHHRLPPKRRAGRKKFRETRHP. Positions 7–16 are enriched in low complexity; it reads SSASSSSVSP. Residues 23–41 show a composition bias toward basic residues; sequence GHHHRLPPKRRAGRKKFRE. Residues 46–105 constitute a DNA-binding region (AP2/ERF); the sequence is VYRGVRARAGGSRWVCEVREPQAQARIWLGTYPTPEMAARAHDVAAIALRGERGAELNFP. The tract at residues 134–161 is disordered; sequence RRPPPPLALPEDPQEGTSGGGATATSGR.

It belongs to the AP2/ERF transcription factor family. ERF subfamily. As to expression, mostly expressed in developing seeds and apices.

It localises to the nucleus. In terms of biological role, transcriptional activator that binds specifically to the DNA sequence 5'-[AG]CCGAC-3'. Binding to the C-repeat/DRE element mediates high salinity- and dehydration-inducible transcription. The sequence is that of Dehydration-responsive element-binding protein 1F (DREB1F) from Oryza sativa subsp. indica (Rice).